Here is a 371-residue protein sequence, read N- to C-terminus: Tetraacyldisaccharide 4'-kinase (371 aa).

Residue 48–55 (SAGGTGKT) participates in ATP binding.

This sequence belongs to the LpxK family.

It carries out the reaction a lipid A disaccharide + ATP = a lipid IVA + ADP + H(+). It participates in glycolipid biosynthesis; lipid IV(A) biosynthesis; lipid IV(A) from (3R)-3-hydroxytetradecanoyl-[acyl-carrier-protein] and UDP-N-acetyl-alpha-D-glucosamine: step 6/6. Transfers the gamma-phosphate of ATP to the 4'-position of a tetraacyldisaccharide 1-phosphate intermediate (termed DS-1-P) to form tetraacyldisaccharide 1,4'-bis-phosphate (lipid IVA). In Chlorobium chlorochromatii (strain CaD3), this protein is Tetraacyldisaccharide 4'-kinase.